A 493-amino-acid chain; its full sequence is Probable cytochrome P450 6a13 (493 aa).

Cysteine 435 contributes to the heme binding site.

The protein belongs to the cytochrome P450 family. Requires heme as cofactor.

The protein resides in the endoplasmic reticulum membrane. The protein localises to the microsome membrane. May be involved in the metabolism of insect hormones and in the breakdown of synthetic insecticides. The chain is Probable cytochrome P450 6a13 (Cyp6a13) from Drosophila melanogaster (Fruit fly).